A 217-amino-acid chain; its full sequence is Fucoxanthin-chlorophyll a-c binding protein A, chloroplastic (217 aa).

Residues 1–39 (MKSAVMAVACAAAPGLRRPSAFNGAALTTSAKSSSAMKM) constitute a chloroplast transit peptide. The next 3 helical transmembrane spans lie at 81–101 (IAML…PGML), 122–142 (IPPA…LAVM), and 183–203 (GRAA…NNKP).

It belongs to the fucoxanthin chlorophyll protein family. In terms of assembly, the LHC complex of chromophytic algae is composed of fucoxanthin, chlorophyll A and C bound non-covalently by fucoxanthin chlorophyll proteins (FCPs). The ratio of pigments in this LHC is; fucoxanthin: chlorophyll C: chlorophyll A; (0.6-1): (0.1-0.3): (1).

Its subcellular location is the plastid. It is found in the chloroplast thylakoid membrane. Its function is as follows. The light-harvesting complex (LHC) functions as a light receptor, it captures and delivers excitation energy to photosystems with which it is closely associated. Energy is transferred from the carotenoid and chlorophyll C (or B) to chlorophyll A and the photosynthetic reaction centers where it is used to synthesize ATP and reducing power. This chain is Fucoxanthin-chlorophyll a-c binding protein A, chloroplastic (FCPA), found in Macrocystis pyrifera (Giant kelp).